The sequence spans 568 residues: Putative DEAD-box RNA helicase HEL64 (568 aa).

The tract at residues 1-34 (MEETYSPFTGRQGQYNQGYNGGGRRDSRGGMGER) is disordered. A compositionally biased stretch (basic and acidic residues) spans 23 to 34 (GRRDSRGGMGER). A Q motif motif is present at residues 102–130 (FDHLCGIVPPYLLKKLTAQNFTAPTPVQA). Residues 133-307 (WPVLLSGRDL…AEFQKQWIRI (175 aa)) form the Helicase ATP-binding domain. An ATP-binding site is contributed by 146 to 153 (AKTGSGKT). Positions 255–258 (DEAD) match the DEAD box motif. The region spanning 335 to 483 (ELRKLMQEHR…EIPDWMIEWN (149 aa)) is the Helicase C-terminal domain.

This sequence belongs to the DEAD box helicase family. DDX5/DBP2 subfamily.

The protein resides in the nucleus. The catalysed reaction is ATP + H2O = ADP + phosphate + H(+). In Trypanosoma brucei brucei, this protein is Putative DEAD-box RNA helicase HEL64 (HEL64).